The primary structure comprises 194 residues: Protein PHLOEM PROTEIN 2-LIKE A2 (194 aa).

The helical transmembrane segment at 49 to 71 (VTFVFFCFFKISLNSAYLYTLYS) threads the bilayer.

As to expression, vascular tissues, specifically in phloem companion cell-sieve element complexes.

It localises to the membrane. The sequence is that of Protein PHLOEM PROTEIN 2-LIKE A2 (PP2A2) from Arabidopsis thaliana (Mouse-ear cress).